A 1195-amino-acid polypeptide reads, in one-letter code: Voltage-gated inwardly rectifying potassium channel KCNH7 (1195 aa).

Residues methionine 1–tryptophan 412 are Cytoplasmic-facing. Positions isoleucine 41–histidine 70 constitute a PAS domain. A PAC domain is found at arginine 92–valine 144. Serine 174 is modified (phosphoserine). The segment at serine 194–threonine 216 is disordered. 2 positions are modified to phosphoserine: serine 238 and serine 319. A helical membrane pass occupies residues leucine 413–leucine 433. Residues asparagine 434–serine 449 lie on the Extracellular side of the membrane. The chain crosses the membrane as a helical span at residues proline 450 to phenylalanine 470. At arginine 471–lysine 494 the chain is on the cytoplasmic side. The chain crosses the membrane as a helical span at residues glycine 495–glycine 515. Topologically, residues serine 516–threonine 521 are extracellular. A helical; Voltage-sensor membrane pass occupies residues leucine 522–aspartate 542. Topologically, residues arginine 543–alanine 549 are cytoplasmic. The chain crosses the membrane as a helical span at residues alanine 550–tryptophan 570. Over tyrosine 571–tyrosine 614 the chain is Extracellular. Asparagine 600 carries N-linked (GlcNAc...) asparagine glycosylation. An intramembrane region (pore-forming) is located at residues valine 615 to proline 635. Residues serine 627 to asparagine 632 carry the Selectivity filter motif. Over asparagine 636–lysine 641 the chain is Extracellular. The helical transmembrane segment at isoleucine 642–valine 662 threads the bilayer. At serine 663 to lysine 1195 the chain is on the cytoplasmic side. The cNMP-binding domain stretch occupies residues alanine 745 to leucine 845. Positions alanine 870–threonine 915 are disordered. Over residues leucine 890–lysine 902 the composition is skewed to basic and acidic residues. Residues serine 891 and serine 894 each carry the phosphoserine modification. A coiled-coil region spans residues tyrosine 1027 to alanine 1054.

This sequence belongs to the potassium channel family. H (Eag) (TC 1.A.1.20) subfamily. Kv11.3/KCNH7 sub-subfamily. The potassium channel is probably composed of a homo- or heterotetrameric complex of pore-forming alpha subunits that can associate only within their subfamily.

The protein localises to the cell membrane. It carries out the reaction K(+)(in) = K(+)(out). In terms of biological role, pore-forming (alpha) subunit of voltage-gated inwardly rectifying potassium channel. Exhibits faster activation and deactivation kinetics and slow inactivation at membrane potentials positive to 240 mV, resulting in the weakest inward rectification. The protein is Voltage-gated inwardly rectifying potassium channel KCNH7 of Mus musculus (Mouse).